Here is a 434-residue protein sequence, read N- to C-terminus: Nicotinate phosphoribosyltransferase (434 aa).

Phosphohistidine; by autocatalysis is present on His-242.

It belongs to the NAPRTase family. In terms of processing, transiently phosphorylated on a His residue during the reaction cycle. Phosphorylation strongly increases the affinity for substrates and increases the rate of nicotinate D-ribonucleotide production. Dephosphorylation regenerates the low-affinity form of the enzyme, leading to product release.

It catalyses the reaction nicotinate + 5-phospho-alpha-D-ribose 1-diphosphate + ATP + H2O = nicotinate beta-D-ribonucleotide + ADP + phosphate + diphosphate. Its pathway is cofactor biosynthesis; NAD(+) biosynthesis; nicotinate D-ribonucleotide from nicotinate: step 1/1. In terms of biological role, catalyzes the synthesis of beta-nicotinate D-ribonucleotide from nicotinate and 5-phospho-D-ribose 1-phosphate at the expense of ATP. The chain is Nicotinate phosphoribosyltransferase from Bradyrhizobium diazoefficiens (strain JCM 10833 / BCRC 13528 / IAM 13628 / NBRC 14792 / USDA 110).